A 283-amino-acid chain; its full sequence is Cyclin-C (283 aa).

The Cyclin N-terminal domain occupies 46-144; the sequence is NVIQALGEHL…ILECEFYLLE (99 aa). Positions 252–283 are disordered; that stretch reads TILSKMPKPKPPPNSEGEQGPNGSQNSSYSQS. The segment covering 272–283 has biased composition (polar residues); it reads PNGSQNSSYSQS. Ser275 bears the Phosphoserine mark.

The protein belongs to the cyclin family. Cyclin C subfamily. As to quaternary structure, component of the Mediator complex, which is composed of MED1, MED4, MED6, MED7, MED8, MED9, MED10, MED11, MED12, MED13, MED13L, MED14, MED15, MED16, MED17, MED18, MED19, MED20, MED21, MED22, MED23, MED24, MED25, MED26, MED27, MED29, MED30, MED31, CCNC, CDK8 and CDC2L6/CDK11. The MED12, MED13, CCNC and CDK8 subunits form a distinct module termed the CDK8 module. Mediator containing the CDK8 module is less active than Mediator lacking this module in supporting transcriptional activation. Individual preparations of the Mediator complex lacking one or more distinct subunits have been variously termed ARC, CRSP, DRIP, PC2, SMCC and TRAP. The cylin/CDK pair formed by CCNC/CDK8 also associates with the large subunit of RNA polymerase II. In terms of tissue distribution, highest levels in pancreas. High levels in heart, liver, skeletal muscle and kidney. Low levels in brain.

The protein localises to the nucleus. Functionally, component of the Mediator complex, a coactivator involved in regulated gene transcription of nearly all RNA polymerase II-dependent genes. Mediator functions as a bridge to convey information from gene-specific regulatory proteins to the basal RNA polymerase II transcription machinery. Mediator is recruited to promoters by direct interactions with regulatory proteins and serves as a scaffold for the assembly of a functional preinitiation complex with RNA polymerase II and the general transcription factors. Binds to and activates cyclin-dependent kinase CDK8 that phosphorylates the CTD (C-terminal domain) of the large subunit of RNA polymerase II (RNAp II), which may inhibit the formation of a transcription initiation complex. The polypeptide is Cyclin-C (CCNC) (Homo sapiens (Human)).